The primary structure comprises 175 residues: Bifunctional protein PyrR (175 aa).

Residues Ile-97–Thr-109 carry the PRPP-binding motif.

The protein belongs to the purine/pyrimidine phosphoribosyltransferase family. PyrR subfamily. Homodimer and homohexamer; in equilibrium.

It catalyses the reaction UMP + diphosphate = 5-phospho-alpha-D-ribose 1-diphosphate + uracil. Its function is as follows. Regulates transcriptional attenuation of the pyrimidine nucleotide (pyr) operon by binding in a uridine-dependent manner to specific sites on pyr mRNA. This disrupts an antiterminator hairpin in the RNA and favors formation of a downstream transcription terminator, leading to a reduced expression of downstream genes. In terms of biological role, also displays a weak uracil phosphoribosyltransferase activity which is not physiologically significant. The protein is Bifunctional protein PyrR of Leuconostoc mesenteroides subsp. mesenteroides (strain ATCC 8293 / DSM 20343 / BCRC 11652 / CCM 1803 / JCM 6124 / NCDO 523 / NBRC 100496 / NCIMB 8023 / NCTC 12954 / NRRL B-1118 / 37Y).